A 271-amino-acid chain; its full sequence is Putative hydro-lyase Mrad2831_3350 (271 aa).

This sequence belongs to the D-glutamate cyclase family.

This Methylobacterium radiotolerans (strain ATCC 27329 / DSM 1819 / JCM 2831 / NBRC 15690 / NCIMB 10815 / 0-1) protein is Putative hydro-lyase Mrad2831_3350.